The sequence spans 198 residues: NAD(P)H dehydrogenase (quinone) (198 aa).

The 186-residue stretch at 4 to 189 (ILVLYYSMYG…SIARYQGEYV (186 aa)) folds into the Flavodoxin-like domain. Residues 10–15 (SMYGHI) and 78–80 (TRF) each bind FMN. NAD(+) is bound at residue Tyr-12. A substrate-binding site is contributed by Trp-98. FMN-binding positions include 113 to 118 (STGTGG) and His-133.

Belongs to the WrbA family. Requires FMN as cofactor.

It carries out the reaction a quinone + NADH + H(+) = a quinol + NAD(+). It catalyses the reaction a quinone + NADPH + H(+) = a quinol + NADP(+). The chain is NAD(P)H dehydrogenase (quinone) from Citrobacter koseri (strain ATCC BAA-895 / CDC 4225-83 / SGSC4696).